The chain runs to 556 residues: Polypeptide N-acetylgalactosaminyltransferase 13 (556 aa).

At 1 to 4 (MRRF) the chain is on the cytoplasmic side. Residues 5–27 (VYCKVVLATSLMWVLVDVFLLLY) traverse the membrane as a helical; Signal-anchor for type II membrane protein segment. At 28-556 (FSECNKCDDK…WLLRNMTLGT (529 aa)) the chain is on the lumenal side. Asparagine 94 and asparagine 116 each carry an N-linked (GlcNAc...) asparagine glycan. 5 cysteine pairs are disulfide-bonded: cysteine 105/cysteine 338, cysteine 329/cysteine 407, cysteine 441/cysteine 458, cysteine 481/cysteine 496, and cysteine 522/cysteine 539. Residues 114–224 (LPNTSVVIVF…LGWLEPLLAR (111 aa)) are catalytic subdomain A. Aspartate 155 and arginine 185 together coordinate substrate. Residues aspartate 208 and histidine 210 each contribute to the Mn(2+) site. The segment at 284 to 346 (PVRTPTMAGG…TCSHVGHVFR (63 aa)) is catalytic subdomain B. Position 315 (tryptophan 315) interacts with substrate. Histidine 343 lines the Mn(2+) pocket. Residues arginine 346 and tyrosine 351 each contribute to the substrate site. The region spanning 428–550 (YSLGEIRNVE…GSRSQQWLLR (123 aa)) is the Ricin B-type lectin domain. A glycan (N-linked (GlcNAc...) asparagine) is linked at asparagine 551.

The protein belongs to the glycosyltransferase 2 family. GalNAc-T subfamily. Mn(2+) serves as cofactor. As to expression, specifically expressed in neuronal cells. Not expressed in glial cells such as astrocytes. Expressed at low level.

The protein resides in the golgi apparatus membrane. It catalyses the reaction L-seryl-[protein] + UDP-N-acetyl-alpha-D-galactosamine = a 3-O-[N-acetyl-alpha-D-galactosaminyl]-L-seryl-[protein] + UDP + H(+). It carries out the reaction L-threonyl-[protein] + UDP-N-acetyl-alpha-D-galactosamine = a 3-O-[N-acetyl-alpha-D-galactosaminyl]-L-threonyl-[protein] + UDP + H(+). It participates in protein modification; protein glycosylation. In terms of biological role, catalyzes the initial reaction in O-linked oligosaccharide biosynthesis, the transfer of an N-acetyl-D-galactosamine (GalNAc) residue from UDP-GalNAc to a serine or threonine residue on the protein receptor. Generates GalNAc-O-Ser/Thr structure also known as Tn antigen, which itself is immunogenic but also serves as a precursor for the synthesis of different mucin-type O-glycan core structures. Contributes to the synthesis of O-linked glycans on mucins and proteoglycans of the central nervous system. Can glycosylate both unmodified peptides and glycopeptides that already contain an O-linked GalNAc sugar. Transfers GalNAc to Thr-/Ser-rich tandem repeats GTTPSPVPTTSTTSAP of MUC5AC. Transfers GalNAc to three consecutive serine/threonine residues on SDC3 forming a triplet-Tn epitope expressed in Purkinje cells of the developing brain. May promote neurogenesis through glycosylation and stabilization of PDPN. The polypeptide is Polypeptide N-acetylgalactosaminyltransferase 13 (Galnt13) (Mus musculus (Mouse)).